The chain runs to 396 residues: Ribosomal RNA large subunit methyltransferase I (396 aa).

The region spanning 2–79 (AVRIKLKPGR…REEEIDREFF (78 aa)) is the PUA domain.

The protein belongs to the methyltransferase superfamily. RlmI family.

Its subcellular location is the cytoplasm. The enzyme catalyses cytidine(1962) in 23S rRNA + S-adenosyl-L-methionine = 5-methylcytidine(1962) in 23S rRNA + S-adenosyl-L-homocysteine + H(+). Specifically methylates the cytosine at position 1962 (m5C1962) of 23S rRNA. The chain is Ribosomal RNA large subunit methyltransferase I from Shewanella sp. (strain MR-7).